Here is a 310-residue protein sequence, read N- to C-terminus: Thioredoxin reductase (310 aa).

34 to 41 lines the FAD pocket; sequence NGMQPGGQ. Cys135 and Cys138 are disulfide-bonded. 281–290 lines the FAD pocket; that stretch reads DVQDKIYRQA.

This sequence belongs to the class-II pyridine nucleotide-disulfide oxidoreductase family. As to quaternary structure, homodimer. FAD serves as cofactor.

It localises to the cytoplasm. The catalysed reaction is [thioredoxin]-dithiol + NADP(+) = [thioredoxin]-disulfide + NADPH + H(+). The chain is Thioredoxin reductase (trxB) from Rickettsia prowazekii (strain Madrid E).